Here is a 145-residue protein sequence, read N- to C-terminus: 3-dehydroquinate dehydratase (145 aa).

Tyr-23 functions as the Proton acceptor in the catalytic mechanism. Positions 74, 80, and 87 each coordinate substrate. His-100 (proton donor) is an active-site residue. Substrate contacts are provided by residues 101 to 102 (LS) and Arg-111.

Belongs to the type-II 3-dehydroquinase family. Homododecamer.

The catalysed reaction is 3-dehydroquinate = 3-dehydroshikimate + H2O. Its pathway is metabolic intermediate biosynthesis; chorismate biosynthesis; chorismate from D-erythrose 4-phosphate and phosphoenolpyruvate: step 3/7. Functionally, catalyzes a trans-dehydration via an enolate intermediate. The protein is 3-dehydroquinate dehydratase of Bacillus licheniformis (strain ATCC 14580 / DSM 13 / JCM 2505 / CCUG 7422 / NBRC 12200 / NCIMB 9375 / NCTC 10341 / NRRL NRS-1264 / Gibson 46).